Here is a 29-residue protein sequence, read N- to C-terminus: MRSFDQGSTRAPARERCRRQRPEGRSAQR.

The disordered stretch occupies residues 1–29 (MRSFDQGSTRAPARERCRRQRPEGRSAQR). Over residues 12–29 (PARERCRRQRPEGRSAQR) the composition is skewed to basic and acidic residues.

The protein is Protamine-like protein (tpr) of Escherichia coli (strain K12).